Consider the following 196-residue polypeptide: Holliday junction branch migration complex subunit RuvA (196 aa).

The interval 1 to 65 is domain I; that stretch reads MIGNLSGTVD…ENTTQLYGFI (65 aa). The interval 66–143 is domain II; that stretch reads NKEEQSCLRL…KLETNNNNFY (78 aa). The segment at 144–147 is flexible linker; the sequence is PINE. The interval 147-196 is domain III; the sequence is EDAVSALINLGYEKTKVYDTIKKYKPNLDTKDIIRTALKELSNYEIDIMQ.

The protein belongs to the RuvA family. As to quaternary structure, homotetramer. Forms an RuvA(8)-RuvB(12)-Holliday junction (HJ) complex. HJ DNA is sandwiched between 2 RuvA tetramers; dsDNA enters through RuvA and exits via RuvB. An RuvB hexamer assembles on each DNA strand where it exits the tetramer. Each RuvB hexamer is contacted by two RuvA subunits (via domain III) on 2 adjacent RuvB subunits; this complex drives branch migration. In the full resolvosome a probable DNA-RuvA(4)-RuvB(12)-RuvC(2) complex forms which resolves the HJ.

The protein resides in the cytoplasm. In terms of biological role, the RuvA-RuvB-RuvC complex processes Holliday junction (HJ) DNA during genetic recombination and DNA repair, while the RuvA-RuvB complex plays an important role in the rescue of blocked DNA replication forks via replication fork reversal (RFR). RuvA specifically binds to HJ cruciform DNA, conferring on it an open structure. The RuvB hexamer acts as an ATP-dependent pump, pulling dsDNA into and through the RuvAB complex. HJ branch migration allows RuvC to scan DNA until it finds its consensus sequence, where it cleaves and resolves the cruciform DNA. The sequence is that of Holliday junction branch migration complex subunit RuvA from Wolbachia sp. subsp. Brugia malayi (strain TRS).